We begin with the raw amino-acid sequence, 726 residues long: Probable dipeptidyl-peptidase 5 (726 aa).

Residues 1–19 (MAAAKWLIASLAFASSGLA) form the signal peptide. Residues N96 and N252 are each glycosylated (N-linked (GlcNAc...) asparagine). A disordered region spans residues 269–291 (AEPINKRNGPRTPQGIEGASSSP). Catalysis depends on S558, which acts as the Charge relay system. N605 is a glycosylation site (N-linked (GlcNAc...) asparagine). Residues D641 and H673 each act as charge relay system in the active site. Residue N699 is glycosylated (N-linked (GlcNAc...) asparagine).

Belongs to the peptidase S9C family.

The protein resides in the secreted. Functionally, extracellular dipeptidyl-peptidase which removes N-terminal dipeptides sequentially from polypeptides having unsubstituted N-termini. Contributes to pathogenicity. The chain is Probable dipeptidyl-peptidase 5 (DPP5) from Trichophyton verrucosum (strain HKI 0517).